Here is a 108-residue protein sequence, read N- to C-terminus: Insulin-like peptide 17 (108 aa).

The signal sequence occupies residues 1 to 19; sequence MFSTRGVLLLLSLMAAVAA.

Belongs to the insulin family. In terms of tissue distribution, expressed in head neurons and the uterus.

It is found in the secreted. Functionally, involved in the regulation of the larval diapause. The polypeptide is Insulin-like peptide 17 (Caenorhabditis elegans).